The following is a 1374-amino-acid chain: DNA-directed RNA polymerase subunit beta (1374 aa).

The protein belongs to the RNA polymerase beta chain family. The RNAP catalytic core consists of 2 alpha, 1 beta, 1 beta' and 1 omega subunit. When a sigma factor is associated with the core the holoenzyme is formed, which can initiate transcription.

The catalysed reaction is RNA(n) + a ribonucleoside 5'-triphosphate = RNA(n+1) + diphosphate. DNA-dependent RNA polymerase catalyzes the transcription of DNA into RNA using the four ribonucleoside triphosphates as substrates. The chain is DNA-directed RNA polymerase subunit beta from Paracidovorax citrulli (strain AAC00-1) (Acidovorax citrulli).